The chain runs to 373 residues: Peptide chain release factor 1-like, mitochondrial (373 aa).

Residues 1-25 (MRSGFLSGARRLWARRAFSRTPPPS) constitute a mitochondrion transit peptide. A coiled-coil region spans residues 56–110 (QLAAAARLLSEKERELRDTESLLHDENEDLKKLAESEIALCQKQITELKHQIISL). The tract at residues 229-293 (PKDLRIDTKR…LRARLYSMHL (65 aa)) is GGQ domain. Residues 243–245 (GGQ) carry the GGQ motif. Gln245 carries the N5-methylglutamine modification.

It belongs to the prokaryotic/mitochondrial release factor family. In terms of processing, methylation of glutamine in the GGQ triplet by HEMK1 is conserved from bacteria to mammals.

The protein resides in the mitochondrion. Mitochondrial peptide chain release factor that directs the termination of translation in response to the peptide chain termination codons UAA and UAG. This Mus musculus (Mouse) protein is Peptide chain release factor 1-like, mitochondrial (Mtrf1l).